Consider the following 319-residue polypeptide: ATP-dependent 6-phosphofructokinase (319 aa).

Gly11 provides a ligand contact to ATP. 21–25 lines the ADP pocket; it reads RAVVR. Residues 72–73 and 102–105 contribute to the ATP site; these read RC and GDGS. Asp103 is a Mg(2+) binding site. 125–127 serves as a coordination point for substrate; the sequence is TID. The active-site Proton acceptor is the Asp127. Arg154 contributes to the ADP binding site. Substrate-binding positions include Arg162 and 169 to 171; that span reads MGR. Residues 185–187, Arg211, and 213–215 contribute to the ADP site; these read GAE and KKH. Residues Glu222, Arg243, and 249-252 each bind substrate; that span reads HIQR.

This sequence belongs to the phosphofructokinase type A (PFKA) family. ATP-dependent PFK group I subfamily. Prokaryotic clade 'B1' sub-subfamily. Homotetramer. It depends on Mg(2+) as a cofactor.

It is found in the cytoplasm. The catalysed reaction is beta-D-fructose 6-phosphate + ATP = beta-D-fructose 1,6-bisphosphate + ADP + H(+). It participates in carbohydrate degradation; glycolysis; D-glyceraldehyde 3-phosphate and glycerone phosphate from D-glucose: step 3/4. With respect to regulation, allosterically activated by ADP and other diphosphonucleosides, and allosterically inhibited by phosphoenolpyruvate. Functionally, catalyzes the phosphorylation of D-fructose 6-phosphate to fructose 1,6-bisphosphate by ATP, the first committing step of glycolysis. This is ATP-dependent 6-phosphofructokinase from Bacillus pumilus (strain SAFR-032).